Reading from the N-terminus, the 170-residue chain is Endoribonuclease YbeY (170 aa).

Residues histidine 118, histidine 122, and histidine 128 each contribute to the Zn(2+) site.

Belongs to the endoribonuclease YbeY family. Requires Zn(2+) as cofactor.

The protein localises to the cytoplasm. Functionally, single strand-specific metallo-endoribonuclease involved in late-stage 70S ribosome quality control and in maturation of the 3' terminus of the 16S rRNA. The chain is Endoribonuclease YbeY from Mycobacteroides abscessus (strain ATCC 19977 / DSM 44196 / CCUG 20993 / CIP 104536 / JCM 13569 / NCTC 13031 / TMC 1543 / L948) (Mycobacterium abscessus).